We begin with the raw amino-acid sequence, 951 residues long: Coiled-coil domain-containing protein 15 (951 aa).

4 coiled-coil regions span residues 64–89 (LIEE…QVKY), 154–193 (DGIE…VIKK), 782–813 (MDIE…EQEC), and 839–874 (LAQL…IQEK).

As to quaternary structure, interacts with POC5, POC1B, CETN2 and FAM161A.

The protein localises to the cytoplasm. The protein resides in the cytoskeleton. It is found in the microtubule organizing center. It localises to the centrosome. Its subcellular location is the centriole. The protein localises to the centriolar satellite. Its function is as follows. Plays an important role in primary cilium assembly, maintenance, and length regulation. Interacts with centriole inner scaffold proteins to promote proper centriole size and integrity and assembly of functional cilia. Required for the recruitment of both the inner scaffold protein POC1B and the distal SFI1/CETN2 complex to centrioles. The sequence is that of Coiled-coil domain-containing protein 15 (CCDC15) from Homo sapiens (Human).